Reading from the N-terminus, the 741-residue chain is MTMKQYTMSKMNAETQTQTRESFPTDDPAVVTCGLPYANGDLHIGHLRTYVGGDIFSRALKRLGQETAFVSGSDMHGTPVAVNAAEEGVTPESFALRHHEQYETTFPQFGIEFDNYGHTHDETNVEMTREIVEALIQAGYVYEREIPVAYDPAADQWLPDRFVNGTCPYCGAHARGDECDEGCGRHLEPGEIETPVSTITGNDAEYRRREHQFFAVSELQSYLSSFLDRLEGTTNAQNQPREWVEGELQDWCITRDMDWGVDYPDDNDLVLYVWVDAPIEYISSTKQYAERVGTDSFDWKNAWRDIPGVRSHSSSSAKDSSEGNSPSNINNGGEIIHIIGRDIIQHHTVFWPAMLHAAGYTEPRAVMASGFITLEGKGFSTSRNRAVWADEYLAEGFHPDLLRYYLATNGGFQQDVDFSWSRFRERVNNELVGTVGNFIYRSLLFAAREFDGTPDVALSDSVEERIETAIDAFTAGVNEYSVRAVGDAAVKLAQFGNEYIQHHEPWKLSNDDPQKQQVMRDCIQLAKAIAVLFEPVTPAAAERVWADLGESGDIHTVGIESALVAPPQTFDEPTELFEKIPEERVDELTAKLADRVTDPTDDDDSDTDTETGTDVAETTNESHSESNMTEIDPIADERIDFEEFEELDLRVAEIIETEPIEDADKLARIVVDLGIEQRQLVAGIRQLHDLDDLIGETVVIVANLEKAEIFGVESNGMLLAAGADADLLTTREDADPGTSIQ.

Over residues 1 to 22 (MTMKQYTMSKMNAETQTQTRES) the composition is skewed to polar residues. The disordered stretch occupies residues 1-25 (MTMKQYTMSKMNAETQTQTRESFPT). The short motif at 36–46 (PYANGDLHIGH) is the 'HIGH' region element. Cysteine 167, cysteine 170, cysteine 179, and cysteine 183 together coordinate Zn(2+). A disordered region spans residues 309 to 329 (VRSHSSSSAKDSSEGNSPSNI). Residues 311 to 329 (SHSSSSAKDSSEGNSPSNI) show a composition bias toward low complexity. Threonine 381 is an ATP binding site. Positions 591–629 (KLADRVTDPTDDDDSDTDTETGTDVAETTNESHSESNMT) are disordered. Residues 599-611 (PTDDDDSDTDTET) show a composition bias toward acidic residues. The segment covering 616-629 (AETTNESHSESNMT) has biased composition (polar residues). One can recognise a tRNA-binding domain in the interval 643-741 (EFEELDLRVA…EDADPGTSIQ (99 aa)).

Belongs to the class-I aminoacyl-tRNA synthetase family. MetG type 1 subfamily. Homodimer. It depends on Zn(2+) as a cofactor.

The protein resides in the cytoplasm. The enzyme catalyses tRNA(Met) + L-methionine + ATP = L-methionyl-tRNA(Met) + AMP + diphosphate. Functionally, is required not only for elongation of protein synthesis but also for the initiation of all mRNA translation through initiator tRNA(fMet) aminoacylation. The chain is Methionine--tRNA ligase from Haloquadratum walsbyi (strain DSM 16790 / HBSQ001).